Consider the following 355-residue polypeptide: Peptide chain release factor 1 (355 aa).

Gln-233 carries the N5-methylglutamine modification. Residues 280–293 (KRRQKEQERSDSRR) show a composition bias toward basic and acidic residues. Positions 280–310 (KRRQKEQERSDSRRGQVGSGDRSERIRTYNF) are disordered.

This sequence belongs to the prokaryotic/mitochondrial release factor family. Methylated by PrmC. Methylation increases the termination efficiency of RF1.

The protein resides in the cytoplasm. Functionally, peptide chain release factor 1 directs the termination of translation in response to the peptide chain termination codons UAG and UAA. In Rickettsia prowazekii (strain Madrid E), this protein is Peptide chain release factor 1 (prfA).